We begin with the raw amino-acid sequence, 149 residues long: Ubiquitin-conjugating enzyme E2 pex4 (149 aa).

In terms of domain architecture, UBC core spans Met1–Cys149. The active-site Glycyl thioester intermediate is Cys86.

The protein belongs to the ubiquitin-conjugating enzyme family.

It carries out the reaction S-ubiquitinyl-[E1 ubiquitin-activating enzyme]-L-cysteine + [E2 ubiquitin-conjugating enzyme]-L-cysteine = [E1 ubiquitin-activating enzyme]-L-cysteine + S-ubiquitinyl-[E2 ubiquitin-conjugating enzyme]-L-cysteine.. It functions in the pathway protein modification; protein ubiquitination. Functionally, catalyzes the covalent attachment of ubiquitin to other proteins. Essential for peroxisome biogenesis. In Dictyostelium discoideum (Social amoeba), this protein is Ubiquitin-conjugating enzyme E2 pex4 (pex4).